We begin with the raw amino-acid sequence, 190 residues long: Glucose-6-phosphate isomerase (190 aa).

Fe cation-binding residues include histidine 89, histidine 91, glutamate 98, and histidine 137.

Belongs to the archaeal-type GPI family. In terms of assembly, homodimer. It depends on Fe cation as a cofactor.

It is found in the cytoplasm. The enzyme catalyses alpha-D-glucose 6-phosphate = beta-D-fructose 6-phosphate. It participates in carbohydrate degradation; glycolysis; D-glyceraldehyde 3-phosphate and glycerone phosphate from D-glucose: step 2/4. With respect to regulation, inhibited by mannose 6-phosphate, fructose 1-phosphate and fructose 1,6-bisphosphate. Its activity is also inhibited by Cobalt (II) ions &lt; EDTA &lt; nickel (II) ions &lt; zinc (II) ions &lt;&lt; cadmium (II) ions &lt; copper (II) ions. Sodium and potassium ions and manganese ions show little or no effect on activity. The polypeptide is Glucose-6-phosphate isomerase (pgiA) (Thermococcus litoralis).